The sequence spans 567 residues: UPF0313 protein CTN_0332 (567 aa).

One can recognise a Radical SAM core domain in the interval 288 to 560 (KAIETVKFSI…NKMKENVLFK (273 aa)). Residues Cys303, Cys307, and Cys310 each coordinate [4Fe-4S] cluster.

Belongs to the UPF0313 family. The cofactor is [4Fe-4S] cluster.

This chain is UPF0313 protein CTN_0332, found in Thermotoga neapolitana (strain ATCC 49049 / DSM 4359 / NBRC 107923 / NS-E).